A 100-amino-acid polypeptide reads, in one-letter code: Urease subunit gamma (100 aa).

This sequence belongs to the urease gamma subunit family. In terms of assembly, heterotrimer of UreA (gamma), UreB (beta) and UreC (alpha) subunits. Three heterotrimers associate to form the active enzyme.

It is found in the cytoplasm. The enzyme catalyses urea + 2 H2O + H(+) = hydrogencarbonate + 2 NH4(+). The protein operates within nitrogen metabolism; urea degradation; CO(2) and NH(3) from urea (urease route): step 1/1. The sequence is that of Urease subunit gamma from Ectopseudomonas mendocina (strain ymp) (Pseudomonas mendocina).